Consider the following 230-residue polypeptide: Cytochrome c oxidase subunit 2 (230 aa).

Residues 1 to 14 are Mitochondrial intermembrane-facing; that stretch reads MAHPTQLGFKDAAM. Residues 15-45 form a helical membrane-spanning segment; that stretch reads PVMEELLHFHDHALMIVLLISTLVLYIITAM. Residues 46-59 lie on the Mitochondrial matrix side of the membrane; the sequence is VSTKLTNKYILDSQ. Residues 60-87 traverse the membrane as a helical segment; sequence EIEIVWTILPAVILVLIALPSLRILYLM. Over 88–230 the chain is Mitochondrial intermembrane; sequence DEINDPHLTI…NWSSLMLEDA (143 aa). Cu cation-binding residues include His161, Cys196, Glu198, Cys200, His204, and Met207. Glu198 contributes to the Mg(2+) binding site.

The protein belongs to the cytochrome c oxidase subunit 2 family. As to quaternary structure, component of the cytochrome c oxidase (complex IV, CIV), a multisubunit enzyme composed of 14 subunits. The complex is composed of a catalytic core of 3 subunits MT-CO1, MT-CO2 and MT-CO3, encoded in the mitochondrial DNA, and 11 supernumerary subunits COX4I, COX5A, COX5B, COX6A, COX6B, COX6C, COX7A, COX7B, COX7C, COX8 and NDUFA4, which are encoded in the nuclear genome. The complex exists as a monomer or a dimer and forms supercomplexes (SCs) in the inner mitochondrial membrane with NADH-ubiquinone oxidoreductase (complex I, CI) and ubiquinol-cytochrome c oxidoreductase (cytochrome b-c1 complex, complex III, CIII), resulting in different assemblies (supercomplex SCI(1)III(2)IV(1) and megacomplex MCI(2)III(2)IV(2)). Found in a complex with TMEM177, COA6, COX18, COX20, SCO1 and SCO2. Interacts with TMEM177 in a COX20-dependent manner. Interacts with COX20. Interacts with COX16. Cu cation is required as a cofactor.

The protein localises to the mitochondrion inner membrane. It carries out the reaction 4 Fe(II)-[cytochrome c] + O2 + 8 H(+)(in) = 4 Fe(III)-[cytochrome c] + 2 H2O + 4 H(+)(out). Component of the cytochrome c oxidase, the last enzyme in the mitochondrial electron transport chain which drives oxidative phosphorylation. The respiratory chain contains 3 multisubunit complexes succinate dehydrogenase (complex II, CII), ubiquinol-cytochrome c oxidoreductase (cytochrome b-c1 complex, complex III, CIII) and cytochrome c oxidase (complex IV, CIV), that cooperate to transfer electrons derived from NADH and succinate to molecular oxygen, creating an electrochemical gradient over the inner membrane that drives transmembrane transport and the ATP synthase. Cytochrome c oxidase is the component of the respiratory chain that catalyzes the reduction of oxygen to water. Electrons originating from reduced cytochrome c in the intermembrane space (IMS) are transferred via the dinuclear copper A center (CU(A)) of subunit 2 and heme A of subunit 1 to the active site in subunit 1, a binuclear center (BNC) formed by heme A3 and copper B (CU(B)). The BNC reduces molecular oxygen to 2 water molecules using 4 electrons from cytochrome c in the IMS and 4 protons from the mitochondrial matrix. The sequence is that of Cytochrome c oxidase subunit 2 (mt-co2) from Cyprinus carpio (Common carp).